The following is a 163-amino-acid chain: ATP synthase subunit delta, chloroplastic (163 aa).

This sequence belongs to the ATPase delta chain family. As to quaternary structure, F-type ATPases have 2 components, F(1) - the catalytic core - and F(0) - the membrane proton channel. F(1) has five subunits: alpha(3), beta(3), gamma(1), delta(1), epsilon(1). CF(0) has four main subunits: a(1), b(1), b'(1) and c(10-14). The alpha and beta chains form an alternating ring which encloses part of the gamma chain. F(1) is attached to F(0) by a central stalk formed by the gamma and epsilon chains, while a peripheral stalk is formed by the delta, b and b' chains.

It is found in the plastid. It localises to the chloroplast thylakoid membrane. In terms of biological role, f(1)F(0) ATP synthase produces ATP from ADP in the presence of a proton or sodium gradient. F-type ATPases consist of two structural domains, F(1) containing the extramembraneous catalytic core and F(0) containing the membrane proton channel, linked together by a central stalk and a peripheral stalk. During catalysis, ATP synthesis in the catalytic domain of F(1) is coupled via a rotary mechanism of the central stalk subunits to proton translocation. Its function is as follows. This protein is part of the stalk that links CF(0) to CF(1). It either transmits conformational changes from CF(0) to CF(1) or is implicated in proton conduction. The polypeptide is ATP synthase subunit delta, chloroplastic (Cyanidioschyzon merolae (strain NIES-3377 / 10D) (Unicellular red alga)).